Here is a 1086-residue protein sequence, read N- to C-terminus: Fused isobutyryl-CoA mutase (1086 aa).

The 131-residue stretch at 10-140 folds into the B12-binding domain; sequence HVRFVTASSL…QGMINVMLEE (131 aa). An adenosylcob(III)alamin-binding site is contributed by H23. The tract at residues 153-407 is GTPase chaperone MeaI; it reads LERLPSGDVQ…FVALVDTINK (255 aa). 210 to 215 contacts GTP; sequence GAGKSS. 4 residues coordinate Mg(2+): S214, V238, D239, and D252. R255 contributes to the GTP binding site. E300 and T301 together coordinate Mg(2+). A GTP-binding site is contributed by 347-350; that stretch reads NKFE. The segment at 408-570 is linker; it reads KAGTNWKTSL…YKENVPGSFP (163 aa). Substrate is bound by residues F578, R613, R719, Y763, S812, R847, and K852. Positions 964 and 1085 each coordinate GTP.

This sequence belongs to the IcmF family. In terms of assembly, homodimer. Requires adenosylcob(III)alamin as cofactor. Mg(2+) serves as cofactor.

The enzyme catalyses 2-methylpropanoyl-CoA = butanoyl-CoA. It carries out the reaction 3-methylbutanoyl-CoA = 2,2-dimethylpropanoyl-CoA. The catalysed reaction is GTP + H2O = GDP + phosphate + H(+). In terms of biological role, catalyzes the reversible interconversion of isobutyryl-CoA and n-butyryl-CoA, and to a lesser extent, of pivalyl-CoA and isovaleryl-CoA, using radical chemistry. Also exhibits GTPase activity, associated with its G-protein domain (MeaI) that functions as a chaperone that assists cofactor delivery and proper holo-enzyme assembly. Also displays ATPase activity. Is not able to convert 3-hydroxybutyryl-CoA to 2-hydroxyisobutyryl-CoA. Does not exhibit methylmalonyl-CoA mutase (MCM) activity. The polypeptide is Fused isobutyryl-CoA mutase (Geobacillus kaustophilus (strain HTA426)).